Reading from the N-terminus, the 479-residue chain is Oxysterol-binding protein homolog C23B6.01c (479 aa).

4 positions are modified to phosphoserine: Ser328, Ser408, Ser409, and Ser421. The segment covering 404–418 (KPEDSSIHKHSRDAS) has biased composition (basic and acidic residues). Residues 404–479 (KPEDSSIHKH…KLHEEQDPAL (76 aa)) form a disordered region. The segment covering 439–452 (QSTASFVTYRSDNG) has biased composition (polar residues). Basic and acidic residues predominate over residues 470 to 479 (KLHEEQDPAL).

It belongs to the OSBP family.

Its subcellular location is the cytoplasm. The protein localises to the nucleus. This Schizosaccharomyces pombe (strain 972 / ATCC 24843) (Fission yeast) protein is Oxysterol-binding protein homolog C23B6.01c.